A 211-amino-acid polypeptide reads, in one-letter code: MARYTGPVCKLSRREGVDLMLKSGNSGRKVLERRGSQPPGQHGASVRRRQLSDYGVQLREKQKVRRIYGVLERQFRRYYGIATRTTGQTGAVLLQILERRLDNVVFRLGYAVTRAQARQLVNHGHITVNGRKTDIPSALVEVGDVIGVRAESRKRDYFKDLEETKQLNRVSPPSWLSLDAGKMEGVVQTFPSREELDMSINEQLIVEFYSR.

The disordered stretch occupies residues 27–48; the sequence is GRKVLERRGSQPPGQHGASVRR. Residues 99–162 form the S4 RNA-binding domain; sequence RRLDNVVFRL…RKRDYFKDLE (64 aa).

The protein belongs to the universal ribosomal protein uS4 family. As to quaternary structure, part of the 30S ribosomal subunit. Contacts protein S5. The interaction surface between S4 and S5 is involved in control of translational fidelity.

Functionally, one of the primary rRNA binding proteins, it binds directly to 16S rRNA where it nucleates assembly of the body of the 30S subunit. Its function is as follows. With S5 and S12 plays an important role in translational accuracy. This Herpetosiphon aurantiacus (strain ATCC 23779 / DSM 785 / 114-95) protein is Small ribosomal subunit protein uS4.